Consider the following 140-residue polypeptide: Nucleoside diphosphate kinase (140 aa).

ATP-binding residues include lysine 11, phenylalanine 59, arginine 87, threonine 93, arginine 104, and asparagine 114. Histidine 117 acts as the Pros-phosphohistidine intermediate in catalysis.

It belongs to the NDK family. In terms of assembly, homotetramer. Mg(2+) serves as cofactor.

The protein localises to the cytoplasm. The catalysed reaction is a 2'-deoxyribonucleoside 5'-diphosphate + ATP = a 2'-deoxyribonucleoside 5'-triphosphate + ADP. The enzyme catalyses a ribonucleoside 5'-diphosphate + ATP = a ribonucleoside 5'-triphosphate + ADP. Its function is as follows. Major role in the synthesis of nucleoside triphosphates other than ATP. The ATP gamma phosphate is transferred to the NDP beta phosphate via a ping-pong mechanism, using a phosphorylated active-site intermediate. In Rhizorhabdus wittichii (strain DSM 6014 / CCUG 31198 / JCM 15750 / NBRC 105917 / EY 4224 / RW1) (Sphingomonas wittichii), this protein is Nucleoside diphosphate kinase.